The following is a 64-amino-acid chain: DNA gyrase inhibitor YacG (64 aa).

The Zn(2+) site is built by C9, C12, C28, and C32. Residues 45–64 are disordered; the sequence is KRIPSAGDLSDSDDWSEQQP. Acidic residues predominate over residues 54–64; the sequence is SDSDDWSEQQP.

Belongs to the DNA gyrase inhibitor YacG family. In terms of assembly, interacts with GyrB. Zn(2+) is required as a cofactor.

Functionally, inhibits all the catalytic activities of DNA gyrase by preventing its interaction with DNA. Acts by binding directly to the C-terminal domain of GyrB, which probably disrupts DNA binding by the gyrase. The polypeptide is DNA gyrase inhibitor YacG (Klebsiella pneumoniae (strain 342)).